Reading from the N-terminus, the 314-residue chain is MQVTFLGTSSGVPTLNRNVSAMVLKPPQRSELWLFDCGEGTQHQFIRSNLKLSQIKKIFITHMHGDHIYGLPGLLASIGLAGSSSGIELYGPAPLKNFIDSCLYNSSSRLAYSLKFHRVENAANNKEILFEDSELEVKTAPLKHRIPSFAYRVNQKTRPGRFDIEKAKSKGIPPGPVYADLQRGEEVRLEDGRIFSGKEFCGPPRPGVSMVYCTDTVYTESAIEISRKADLLIHESTYSYKETEMAYERGHSTATMAAQIAAKANVDQLILTHLSPRYTPGNQTCPNDLLNEAKAIFPNTQLAKDFLQIDINKS.

Zn(2+) is bound by residues His-62, His-64, Asp-66, His-67, His-144, Asp-215, and His-273. Catalysis depends on Asp-66, which acts as the Proton acceptor.

The protein belongs to the RNase Z family. In terms of assembly, homodimer. Zn(2+) is required as a cofactor.

The enzyme catalyses Endonucleolytic cleavage of RNA, removing extra 3' nucleotides from tRNA precursor, generating 3' termini of tRNAs. A 3'-hydroxy group is left at the tRNA terminus and a 5'-phosphoryl group is left at the trailer molecule.. In terms of biological role, zinc phosphodiesterase, which displays some tRNA 3'-processing endonuclease activity. Probably involved in tRNA maturation, by removing a 3'-trailer from precursor tRNA. This is Ribonuclease Z from Prochlorococcus marinus (strain NATL2A).